The chain runs to 388 residues: GTPase Obg (388 aa).

One can recognise an Obg domain in the interval 1–159 (MKFVDEAVIK…RELRLELLLL (159 aa)). The region spanning 160–333 (ADVGMLGLPN…LCYKLADFME (174 aa)) is the OBG-type G domain. GTP contacts are provided by residues 166-173 (GLPNAGKS), 191-195 (FTTLI), 213-216 (DIPG), 283-286 (NKVD), and 314-316 (SAV). Mg(2+) contacts are provided by S173 and T193. The tract at residues 359-380 (NQGEVITEDDDDWDDWDDEEDD) is disordered. Residues 364-380 (ITEDDDDWDDWDDEEDD) show a composition bias toward acidic residues.

Belongs to the TRAFAC class OBG-HflX-like GTPase superfamily. OBG GTPase family. In terms of assembly, monomer. Mg(2+) is required as a cofactor.

The protein localises to the cytoplasm. Its function is as follows. An essential GTPase which binds GTP, GDP and possibly (p)ppGpp with moderate affinity, with high nucleotide exchange rates and a fairly low GTP hydrolysis rate. Plays a role in control of the cell cycle, stress response, ribosome biogenesis and in those bacteria that undergo differentiation, in morphogenesis control. This is GTPase Obg from Vibrio vulnificus (strain YJ016).